The sequence spans 242 residues: Coiled-coil domain-containing protein 107 (242 aa).

Positions 1–24 (MEGAGPVLSILGLLLVSAPFGVLG) are cleaved as a signal peptide. Positions 27-62 (PSADLGAHPERGSQVSPGTTEPRRQPPPKDQRERAR) are disordered. The segment covering 47–62 (EPRRQPPPKDQRERAR) has biased composition (basic and acidic residues). Residues 65 to 85 (SLSLGALYTAAVVAFVLFKCL) form a helical membrane-spanning segment. Residues 97 to 132 (EKNKKKSSQSEQQLVQLTQQLAQTEQHLNHLMTQLD) adopt a coiled-coil conformation. The interval 186–210 (KEDQEAGNSQAWEEPITWSPETRNL) is disordered.

It localises to the membrane. The chain is Coiled-coil domain-containing protein 107 (Ccdc107) from Mus musculus (Mouse).